The chain runs to 449 residues: MQVTVNEHDAVECVATATPAGNREAHAHGTDKLAIEGGRRLAGEIAVSGAKNAALPILCAGLLSAEPVRLDNVPDLKDVRTTLALLGQMGMREETDGARVVLDASRVDNPVAPYELVKTMRASILVLGPLLARFGYAKVSLPGGCAIGARPVDQHIKGLQAMGAEIHIEHGYIEARAKRLSGARIVTDMITVTGTENLLMAATLADGETVIENAAREPEVTDLAHLLVAMGAKIDGIGTDRLVIQGVERLHGATHAVIPDRIEAGTFLCAVAAAGGDVTLTGMRAHILDAVIDKLREAGATIDEGVDTLRVRMDGRPSAVAIRTSEYPAFPTDMQAQFMALNAVAQGAAQVTETIFENRFMHVQELNRLGANIAVDGNTALVTGVPKLSGASVMATDLRASASLVIAGLCAQGETLVERIYHLDRGYDRMETKLTAVGANVRRISGSEA.

Residue 51–52 participates in phosphoenolpyruvate binding; the sequence is KN. UDP-N-acetyl-alpha-D-glucosamine is bound at residue Arg-121. Residue Cys-145 is the Proton donor of the active site. At Cys-145 the chain carries 2-(S-cysteinyl)pyruvic acid O-phosphothioketal. UDP-N-acetyl-alpha-D-glucosamine-binding positions include 150-154, Asp-333, and Ile-355; that span reads RPVDQ.

This sequence belongs to the EPSP synthase family. MurA subfamily.

It localises to the cytoplasm. It catalyses the reaction phosphoenolpyruvate + UDP-N-acetyl-alpha-D-glucosamine = UDP-N-acetyl-3-O-(1-carboxyvinyl)-alpha-D-glucosamine + phosphate. The protein operates within cell wall biogenesis; peptidoglycan biosynthesis. Its function is as follows. Cell wall formation. Adds enolpyruvyl to UDP-N-acetylglucosamine. In Burkholderia mallei (strain ATCC 23344), this protein is UDP-N-acetylglucosamine 1-carboxyvinyltransferase.